A 555-amino-acid polypeptide reads, in one-letter code: Glucose-6-phosphate isomerase (555 aa).

Residues 169–170 (GS), 219–224 (SKTFTT), Gln364, Glu368, His399, and Lys521 each bind D-glucose 6-phosphate. Glu368 acts as the Proton donor in catalysis. Residues His399 and Lys521 contribute to the active site.

It belongs to the GPI family. Homodimer.

It localises to the cytoplasm. Its subcellular location is the cytosol. The catalysed reaction is alpha-D-glucose 6-phosphate = beta-D-fructose 6-phosphate. The protein operates within carbohydrate degradation; glycolysis; D-glyceraldehyde 3-phosphate and glycerone phosphate from D-glucose: step 2/4. In terms of biological role, in the cytoplasm, catalyzes the conversion of glucose-6-phosphate to fructose-6-phosphate, the second step in glycolysis, and the reverse reaction during gluconeogenesis. This is Glucose-6-phosphate isomerase (RAG2) from Kluyveromyces lactis (strain ATCC 8585 / CBS 2359 / DSM 70799 / NBRC 1267 / NRRL Y-1140 / WM37) (Yeast).